The chain runs to 146 residues: Transcriptional regulator MraZ (146 aa).

SpoVT-AbrB domains are found at residues 5-47 (EYYH…TITD) and 76-119 (SVQV…AKER).

Belongs to the MraZ family. In terms of assembly, forms oligomers.

Its subcellular location is the cytoplasm. The protein localises to the nucleoid. This chain is Transcriptional regulator MraZ, found in Dictyoglomus turgidum (strain DSM 6724 / Z-1310).